The chain runs to 179 residues: NAD(P)H-quinone oxidoreductase subunit I, chloroplastic (179 aa).

4Fe-4S ferredoxin-type domains are found at residues 55 to 84 (GRIH…VDWR) and 95 to 124 (LNYS…MTEE). [4Fe-4S] cluster contacts are provided by Cys-64, Cys-67, Cys-70, Cys-74, Cys-104, Cys-107, Cys-110, and Cys-114.

This sequence belongs to the complex I 23 kDa subunit family. As to quaternary structure, NDH is composed of at least 16 different subunits, 5 of which are encoded in the nucleus. [4Fe-4S] cluster is required as a cofactor.

The protein localises to the plastid. Its subcellular location is the chloroplast thylakoid membrane. It carries out the reaction a plastoquinone + NADH + (n+1) H(+)(in) = a plastoquinol + NAD(+) + n H(+)(out). It catalyses the reaction a plastoquinone + NADPH + (n+1) H(+)(in) = a plastoquinol + NADP(+) + n H(+)(out). Functionally, NDH shuttles electrons from NAD(P)H:plastoquinone, via FMN and iron-sulfur (Fe-S) centers, to quinones in the photosynthetic chain and possibly in a chloroplast respiratory chain. The immediate electron acceptor for the enzyme in this species is believed to be plastoquinone. Couples the redox reaction to proton translocation, and thus conserves the redox energy in a proton gradient. The sequence is that of NAD(P)H-quinone oxidoreductase subunit I, chloroplastic from Nymphaea alba (White water-lily).